The following is a 472-amino-acid chain: 3-isopropylmalate dehydratase large subunit (472 aa).

3 residues coordinate [4Fe-4S] cluster: cysteine 347, cysteine 407, and cysteine 410.

Belongs to the aconitase/IPM isomerase family. LeuC type 1 subfamily. Heterodimer of LeuC and LeuD. [4Fe-4S] cluster is required as a cofactor.

It catalyses the reaction (2R,3S)-3-isopropylmalate = (2S)-2-isopropylmalate. It functions in the pathway amino-acid biosynthesis; L-leucine biosynthesis; L-leucine from 3-methyl-2-oxobutanoate: step 2/4. Functionally, catalyzes the isomerization between 2-isopropylmalate and 3-isopropylmalate, via the formation of 2-isopropylmaleate. This chain is 3-isopropylmalate dehydratase large subunit, found in Parasynechococcus marenigrum (strain WH8102).